The following is a 468-amino-acid chain: MASALDDPALQRHFKGHKDAVTCVDFSPDSKQLASSSADACVMIWNFKPQSRAYKYPGHKEAVTCVQFSPSGHLVASSSKDRTVRLWAPNIKGESTVLKAHTAVVRCVNFSSDGQTFITASDDKSIKAWNLHRQRFLFSLTQHTNWVRCARFSPDGRLIASCSDDKTVRIWDLTNRLCINTFVDYKGHSNYVDFNQMGTCVASAGADSTVKVWDIRMNKLLQHYQVHNAGVSSLSFHPSGNYLLTASSDGTLKILDLLEGRLIYTLHGHQGPVLSVTFSKSGDQFASGATDAQVLVWKTNFDKYSVKEIVKLQQKRTCPEAPPHLNDIYPRTPHLHSSSGHSIEINPMCEVADTQTFDPPIINVGANLPYCRRTKAVHTLNKHVRNDNYPTPPVAFSYTEGQKEHPLVEEQGVLPPSLSNTLEQIVDQLNVLTQTVSILEHRLTLTEDKLKECLENQQKTSAHASESD.

WD repeat units lie at residues 16-55 (GHKD…RAYK), 58-97 (GHKE…ESTV), 100-139 (AHTA…FLFS), 142-181 (QHTN…CINT), 184-223 (DYKG…LLQH), 226-265 (VHNA…LIYT), and 268-307 (GHQG…YSVK). A coiled-coil region spans residues 420–459 (NTLEQIVDQLNVLTQTVSILEHRLTLTEDKLKECLENQQK).

The protein belongs to the WD repeat POC1 family. In terms of assembly, interacts with pat. As to expression, highly expressed in ovary and, at low levels, in testis.

Its subcellular location is the cytoplasm. It localises to the cytoskeleton. The protein resides in the microtubule organizing center. The protein localises to the centrosome. It is found in the centriole. Plays an important role in centriole assembly and/or stability and ciliogenesis. Involved in early steps of centriole duplication, as well as in the later steps of centriole length control. The polypeptide is POC1 centriolar protein homolog B (poc1b) (Xenopus laevis (African clawed frog)).